Here is a 170-residue protein sequence, read N- to C-terminus: ATP synthase subunit b (170 aa).

A helical membrane pass occupies residues 25–45; that stretch reads LIPNGTFFAVLIIFLIVLGVI. Positions 121–147 are disordered; sequence EVAQTLTQADQQLSAQGDQVRSGLESS. Residues 122–139 are compositionally biased toward polar residues; the sequence is VAQTLTQADQQLSAQGDQ.

Belongs to the ATPase B chain family. F-type ATPases have 2 components, F(1) - the catalytic core - and F(0) - the membrane proton channel. F(1) has five subunits: alpha(3), beta(3), gamma(1), delta(1), epsilon(1). F(0) has three main subunits: a(1), b(2) and c(10-14). The alpha and beta chains form an alternating ring which encloses part of the gamma chain. F(1) is attached to F(0) by a central stalk formed by the gamma and epsilon chains, while a peripheral stalk is formed by the delta and b chains.

The protein localises to the cell membrane. In terms of biological role, f(1)F(0) ATP synthase produces ATP from ADP in the presence of a proton or sodium gradient. F-type ATPases consist of two structural domains, F(1) containing the extramembraneous catalytic core and F(0) containing the membrane proton channel, linked together by a central stalk and a peripheral stalk. During catalysis, ATP synthesis in the catalytic domain of F(1) is coupled via a rotary mechanism of the central stalk subunits to proton translocation. Its function is as follows. Component of the F(0) channel, it forms part of the peripheral stalk, linking F(1) to F(0). This chain is ATP synthase subunit b, found in Mycolicibacterium smegmatis (strain ATCC 700084 / mc(2)155) (Mycobacterium smegmatis).